The sequence spans 108 residues: MNCPLSLQIVNVSYIVNTNSCSWIAFNNSKYPIKTIKINIININILGKINHMVIFCDNNIVIILWKIMVVIISSIIHRTYIRRWISRRNNIRRKASHACKQPNNTTGC.

Residues 59-81 form a helical membrane-spanning segment; sequence NIVIILWKIMVVIISSIIHRTYI.

It localises to the membrane. This is an uncharacterized protein from Rickettsia conorii (strain ATCC VR-613 / Malish 7).